The chain runs to 414 residues: MTQANLSETLFKPRFKHPETSTLVRRFNHGAQPPVQSALDGKTIPHWYRMINRLMWIWRGIDPREILDVQARIVMSDAERTDDDLYDTVIGYRGGNWIYEWATQAMVWQQKACAEEDPQLSGRHWLHAATLYNIAAYPHLKGDDLAEQAQALSNRAYEEAAQRLPGTMRQMEFTVPGGAPITGFLHMPKGDGPFPTVLMCGGLDAMQTDYYSLYERYFAPRGIVMLTIDMPSVGFSSKWKLTQDSSLLHQHVLKALPNVPWVDHTRVAAFGFRFGANVAVRLAYLESPRLKAVACLGPVVHTLLSDFKCQQQVPEMYLDVLASRLGMHDASDEALRVELNRYSLKVQGLLGRRCPTPMLSGYWKNDPFSPEEDSRLITSSSADGKLLEIPFNPVYRNFDKGLQEITGWIEKRLC.

The protein belongs to the FrsA family.

The catalysed reaction is a carboxylic ester + H2O = an alcohol + a carboxylate + H(+). Functionally, catalyzes the hydrolysis of esters. This is Esterase FrsA from Shigella boydii serotype 4 (strain Sb227).